A 187-amino-acid chain; its full sequence is Sodium/potassium ATPase inhibitor SPAI-2 (187 aa).

A signal peptide spans 1–21 (MRSRSFLVLVAVFLICETLVA). Q22 carries the post-translational modification Pyrrolidone carboxylic acid. Residues 22 to 126 (QRLDRIRGPK…NAQLPDKVQD (105 aa)) constitute a propeptide that is removed on maturation. A disordered region spans residues 28 to 98 (RGPKGQGQDP…QDPVKAELPD (71 aa)). Tandem repeats lie at residues 34 to 39 (GQDPVE), 40 to 45 (GQDQDE), 46 to 51 (GPGPVK), 58 to 63 (GQDPVK), 64 to 69 (GQDPVK), 70 to 75 (GQDPVK), 76 to 81 (GQDPVK), 82 to 87 (GQDLVK), 88 to 93 (SQDPVK), 100 to 105 (GQDVVK), 106 to 111 (GHEPVE), 112 to 117 (GQDPVN), 118 to 123 (AQLPDK), and 124 to 129 (VQDPVK). Residues 34–129 (GQDPVEGQDQ…LPDKVQDPVK (96 aa)) form a 14 X 6 AA approximate tandem repeats region. An SVP-1 clotting 1 repeat occupies 64–85 (GQDPVKGQDPVKGQDPVKGQDL). Positions 139–187 (LLSKRGHCPRILFRCPLSNPSNKCWRDYDCPGVKKCCEGFCGKDCLYPK) constitute a WAP domain. 4 cysteine pairs are disulfide-bonded: C146-C175, C153-C179, C162-C174, and C168-C183.

The short form (AA 127-187) may be an artifact due to the strongly acidic conditions of the duodenum. The pro-SPAI form may be the native form. In terms of tissue distribution, small intestine &gt; large intestine. The plasma contains the pro-SPAI form circulating.

Inhibits Na(+),K(+) ATPase by the competitive mode against Na(+). This is Sodium/potassium ATPase inhibitor SPAI-2 from Sus scrofa (Pig).